A 446-amino-acid polypeptide reads, in one-letter code: Probable D-serine dehydratase (446 aa).

An N6-(pyridoxal phosphate)lysine modification is found at lysine 113.

It belongs to the serine/threonine dehydratase family. DsdA subfamily. Requires pyridoxal 5'-phosphate as cofactor.

It carries out the reaction D-serine = pyruvate + NH4(+). The polypeptide is Probable D-serine dehydratase (Burkholderia lata (strain ATCC 17760 / DSM 23089 / LMG 22485 / NCIMB 9086 / R18194 / 383)).